The chain runs to 61 residues: Small ribosomal subunit protein uS14C (61 aa).

Zn(2+)-binding residues include Cys-24, Cys-27, Cys-40, and Cys-43.

This sequence belongs to the universal ribosomal protein uS14 family. Zinc-binding uS14 subfamily. As to quaternary structure, part of the 30S ribosomal subunit. Contacts proteins S3 and S10. The cofactor is Zn(2+).

In terms of biological role, binds 16S rRNA, required for the assembly of 30S particles and may also be responsible for determining the conformation of the 16S rRNA at the A site. This is Small ribosomal subunit protein uS14C from Bacillus licheniformis (strain ATCC 14580 / DSM 13 / JCM 2505 / CCUG 7422 / NBRC 12200 / NCIMB 9375 / NCTC 10341 / NRRL NRS-1264 / Gibson 46).